Here is a 113-residue protein sequence, read N- to C-terminus: Early nodulin-12B (113 aa).

Residues 1–24 (MASFSLSILVFFISALVLVPQGFA) form the signal peptide. The tract at residues 29–113 (NPAYRPPQTK…HPPAEDNIHF (85 aa)) is disordered. Residues 32–42 (YRPPQTKPPVN) are compositionally biased toward pro residues. Tandem repeats lie at residues 34-38 (PPQTK) and 39-43 (PPVNK). The tract at residues 34-109 (PPQTKPPVNK…PTHKHPPAED (76 aa)) is 15 X 5 AA approximate tandem repeats of P-P-[QVHRTA]-[NHKE]-[KEDT]. One copy of the 3; approximate repeat lies at 44 to 48 (PSHKE). Composition is skewed to basic and acidic residues over residues 45–60 (SHKE…KEPP) and 67–113 (KEPP…NIHF). 3 consecutive repeat copies span residues 49 to 53 (PPVHK), 54 to 58 (PPHKE), and 59 to 63 (PPVNK). The stretch at 64 to 68 (PRHKE) is one 7; approximate repeat. 4 consecutive repeat copies span residues 69–73 (PPVHK), 74–78 (PPHKD), 79–83 (PPVNK), and 84–88 (PPQKE). Residues 89-93 (SPVHK) form a 12; approximate repeat. 3 consecutive repeat copies span residues 94 to 98 (PPRKE), 99 to 103 (PPTHK), and 105 to 109 (PPAED).

The protein belongs to the plant proline-rich protein superfamily. ENOD12 family. Expressed only in young nodules.

The protein resides in the secreted. Its subcellular location is the cell wall. Functionally, involved in the infection process during the plant-rhizobium interaction. This is Early nodulin-12B (ENOD12B) from Medicago sativa (Alfalfa).